The primary structure comprises 317 residues: Aspartate carbamoyltransferase catalytic subunit (317 aa).

The carbamoyl phosphate site is built by Arg65 and Thr66. Lys93 serves as a coordination point for L-aspartate. Arg115, His145, and Gln148 together coordinate carbamoyl phosphate. L-aspartate-binding residues include Arg178 and Arg233. Carbamoyl phosphate is bound by residues Gly274 and Pro275.

The protein belongs to the aspartate/ornithine carbamoyltransferase superfamily. ATCase family. In terms of assembly, heterododecamer (2C3:3R2) of six catalytic PyrB chains organized as two trimers (C3), and six regulatory PyrI chains organized as three dimers (R2).

The catalysed reaction is carbamoyl phosphate + L-aspartate = N-carbamoyl-L-aspartate + phosphate + H(+). The protein operates within pyrimidine metabolism; UMP biosynthesis via de novo pathway; (S)-dihydroorotate from bicarbonate: step 2/3. Its function is as follows. Catalyzes the condensation of carbamoyl phosphate and aspartate to form carbamoyl aspartate and inorganic phosphate, the committed step in the de novo pyrimidine nucleotide biosynthesis pathway. The protein is Aspartate carbamoyltransferase catalytic subunit of Methylobacillus flagellatus (strain ATCC 51484 / DSM 6875 / VKM B-1610 / KT).